We begin with the raw amino-acid sequence, 154 residues long: Protein X (154 aa).

A mitochondrial targeting sequence region spans residues 68 to 117 (PCALRFTSARCMATTVNAHQILPKVLHKRTLGLPAMSTTDLEAYFKDCLF).

The protein belongs to the orthohepadnavirus protein X family. In terms of assembly, may form homodimer. May interact with host CEBPA, CFLAR, CREB1, DDB1, E4F1, HBXIP, HSPD1/HSP60, NFKBIA, POLR2E and SMAD4. Interacts with host SMC5-SMC6 complex and induces its degradation. Interacts with host TRPC4AP; leading to prevent ubiquitination of TRPC4AP. Interacts with host PLSCR1; this interaction promotes ubiquitination and degradation of HBx and impairs HBx-mediated cell proliferation. Post-translationally, a fraction may be phosphorylated in insect cells and HepG2 cells, a human hepatoblastoma cell line. Phosphorylated in vitro by host protein kinase C or mitogen-activated protein kinase. N-acetylated in insect cells.

It localises to the host cytoplasm. Its subcellular location is the host nucleus. It is found in the host mitochondrion. In terms of biological role, multifunctional protein that plays a role in silencing host antiviral defenses and promoting viral transcription. Does not seem to be essential for HBV infection. May be directly involved in development of cirrhosis and liver cancer (hepatocellular carcinoma). Most of cytosolic activities involve modulation of cytosolic calcium. The effect on apoptosis is controversial depending on the cell types in which the studies have been conducted. May induce apoptosis by localizing in mitochondria and causing loss of mitochondrial membrane potential. May also modulate apoptosis by binding host CFLAR, a key regulator of the death-inducing signaling complex (DISC). Promotes viral transcription by using the host E3 ubiquitin ligase DDB1 to target the SMC5-SMC6 complex to proteasomal degradation. This host complex would otherwise bind to viral episomal DNA, and prevents its transcription. Moderately stimulates transcription of many different viral and cellular transcription elements. Promoters and enhancers stimulated by HBx contain DNA binding sites for NF-kappa-B, AP-1, AP-2, c-EBP, ATF/CREB, or the calcium-activated factor NF-AT. This Hepatitis B virus genotype A3 (isolate Cameroon/CMR983/1994) (HBV-A) protein is Protein X.